Here is a 289-residue protein sequence, read N- to C-terminus: MSEVSEAEKRRILREKRKQKFSKGAGSARLHKITTQQPGGASGDSTVTSAEISDNEGSLQRGSNSGQSTREIDDLLAAMDPPIEPAEPLESAAPEVAFIQQLMKMQQGSATPPADEKAGGLFSPLLERLAEQEAGGAPVVSGEVGVHQFQVRQLKAYMLLLRWAILLPFIYYVMHPGTAHWLHTSRFLHFVMEPRNFFMVFTTFEVASISIYYQVLLTLERTNKVNSLSYSSKLVTWAGLVPDGMLPIDNLQGKVVVALHYWDILSMYLTDLSLCLVAAGLMKYYHAAP.

Basic and acidic residues predominate over residues 1 to 10 (MSEVSEAEKR). Positions 1–68 (MSEVSEAEKR…LQRGSNSGQS (68 aa)) are disordered. The Cytoplasmic segment spans residues 1-153 (MSEVSEAEKR…VGVHQFQVRQ (153 aa)). The segment covering 11–21 (RILREKRKQKF) has biased composition (basic residues). The span at 33 to 68 (ITTQQPGGASGDSTVTSAEISDNEGSLQRGSNSGQS) shows a compositional bias: polar residues. A helical transmembrane segment spans residues 154–173 (LKAYMLLLRWAILLPFIYYV). The Lumenal portion of the chain corresponds to 174-196 (MHPGTAHWLHTSRFLHFVMEPRN). Residues 197–216 (FFMVFTTFEVASISIYYQVL) traverse the membrane as a helical segment. The Cytoplasmic segment spans residues 217-263 (LTLERTNKVNSLSYSSKLVTWAGLVPDGMLPIDNLQGKVVVALHYWD). Residues 264 to 284 (ILSMYLTDLSLCLVAAGLMKY) form a helical membrane-spanning segment. Residues 285 to 289 (YHAAP) lie on the Lumenal side of the membrane.

Belongs to the GET2 family. In terms of assembly, component of the Golgi to ER traffic (GET) complex, which is composed of GET1, GET2 and GET3. Within the complex, GET1 and GET2 form a heterotetramer which is stabilized by phosphatidylinositol binding and which binds to the GET3 homodimer.

The protein localises to the endoplasmic reticulum membrane. The protein resides in the golgi apparatus membrane. Its function is as follows. Required for the post-translational delivery of tail-anchored (TA) proteins to the endoplasmic reticulum. Together with GET1, acts as a membrane receptor for soluble GET3, which recognizes and selectively binds the transmembrane domain of TA proteins in the cytosol. The GET complex cooperates with the HDEL receptor ERD2 to mediate the ATP-dependent retrieval of resident ER proteins that contain a C-terminal H-D-E-L retention signal from the Golgi to the ER. The protein is Golgi to ER traffic protein 2 of Eremothecium gossypii (strain ATCC 10895 / CBS 109.51 / FGSC 9923 / NRRL Y-1056) (Yeast).